The primary structure comprises 299 residues: ATP phosphoribosyltransferase (299 aa).

This sequence belongs to the ATP phosphoribosyltransferase family. Long subfamily. Mg(2+) is required as a cofactor.

Its subcellular location is the cytoplasm. It carries out the reaction 1-(5-phospho-beta-D-ribosyl)-ATP + diphosphate = 5-phospho-alpha-D-ribose 1-diphosphate + ATP. It functions in the pathway amino-acid biosynthesis; L-histidine biosynthesis; L-histidine from 5-phospho-alpha-D-ribose 1-diphosphate: step 1/9. With respect to regulation, feedback inhibited by histidine. In terms of biological role, catalyzes the condensation of ATP and 5-phosphoribose 1-diphosphate to form N'-(5'-phosphoribosyl)-ATP (PR-ATP). Has a crucial role in the pathway because the rate of histidine biosynthesis seems to be controlled primarily by regulation of HisG enzymatic activity. The polypeptide is ATP phosphoribosyltransferase (Campylobacter lari (strain RM2100 / D67 / ATCC BAA-1060)).